A 119-amino-acid chain; its full sequence is uncharacterized protein (119 aa).

The helical transmembrane segment at Leu-30–Leu-50 threads the bilayer.

The protein resides in the membrane. This is an uncharacterized protein from Saccharomyces cerevisiae (strain ATCC 204508 / S288c) (Baker's yeast).